The sequence spans 715 residues: ATP-dependent zinc metalloprotease FtsH (715 aa).

Topologically, residues M1–R10 are cytoplasmic. A helical membrane pass occupies residues S11 to G31. At R32–S137 the chain is on the extracellular side. A helical transmembrane segment spans residues M138–G158. The Cytoplasmic portion of the chain corresponds to S159–D715. Residues G167–Q187 are disordered. G233 to T240 provides a ligand contact to ATP. H455 is a Zn(2+) binding site. E456 is an active-site residue. Residues H459 and D531 each contribute to the Zn(2+) site.

The protein in the central section; belongs to the AAA ATPase family. It in the C-terminal section; belongs to the peptidase M41 family. Homohexamer. Requires Zn(2+) as cofactor.

Its subcellular location is the cell membrane. Functionally, acts as a processive, ATP-dependent zinc metallopeptidase for both cytoplasmic and membrane proteins. Plays a role in the quality control of integral membrane proteins. In terms of biological role, can complement an E.coli ftsH disruption mutant. The protein is ATP-dependent zinc metalloprotease FtsH of Oenococcus oeni (Leuconostoc oenos).